A 297-amino-acid polypeptide reads, in one-letter code: D-alanine--D-alanine ligase (297 aa).

The ATP-grasp domain occupies 103–293 (KEILMHHRMP…FDSFVKSILE (191 aa)). 129 to 180 (ISFPVAVKPSSGGSSIATFKVKSLEELENAYQQASKHGEVMIEQWVTGKEIT) is a binding site for ATP. Residues Asp247, Glu260, and Asn262 each contribute to the Mg(2+) site.

The protein belongs to the D-alanine--D-alanine ligase family. Requires Mg(2+) as cofactor. It depends on Mn(2+) as a cofactor.

It is found in the cytoplasm. The catalysed reaction is 2 D-alanine + ATP = D-alanyl-D-alanine + ADP + phosphate + H(+). The protein operates within cell wall biogenesis; peptidoglycan biosynthesis. Its function is as follows. Cell wall formation. In Francisella philomiragia subsp. philomiragia (strain ATCC 25017 / CCUG 19701 / FSC 153 / O#319-036), this protein is D-alanine--D-alanine ligase.